The chain runs to 236 residues: DNA repair protein RecO (236 aa).

This sequence belongs to the RecO family.

Functionally, involved in DNA repair and RecF pathway recombination. The protein is DNA repair protein RecO of Rickettsia typhi (strain ATCC VR-144 / Wilmington).